The chain runs to 479 residues: Bifunctional aspartate aminotransferase and glutamate/aspartate-prephenate aminotransferase (479 aa).

The N-terminal 79 residues, 1–79, are a transit peptide targeting the chloroplast; the sequence is MAATTTTSSS…VEVDISLSPR (79 aa). Glycine 111 provides a ligand contact to L-aspartate. A pyridoxal 5'-phosphate-binding site is contributed by 172 to 173; that stretch reads AK. L-aspartate is bound by residues tryptophan 197 and asparagine 247. Residues asparagine 247, tyrosine 279, and 307 to 309 contribute to the pyridoxal 5'-phosphate site; that span reads GFS. At lysine 310 the chain carries N6-(pyridoxal phosphate)lysine. A pyridoxal 5'-phosphate-binding site is contributed by arginine 318. Arginine 449 lines the L-aspartate pocket.

The protein belongs to the class-I pyridoxal-phosphate-dependent aminotransferase family. Homodimer. Pyridoxal 5'-phosphate is required as a cofactor. In terms of tissue distribution, expressed in flowers, pistils, stamens, ovaries and at lower levels in leaves and sepals.

Its subcellular location is the plastid. It is found in the chloroplast. It catalyses the reaction L-aspartate + 2-oxoglutarate = oxaloacetate + L-glutamate. The enzyme catalyses L-arogenate + oxaloacetate = prephenate + L-aspartate. It carries out the reaction L-arogenate + 2-oxoglutarate = prephenate + L-glutamate. The protein operates within amino-acid biosynthesis; L-phenylalanine biosynthesis; L-arogenate from prephenate (L-Asp route): step 1/1. It participates in amino-acid biosynthesis; L-phenylalanine biosynthesis; L-arogenate from prephenate (L-Glu route): step 1/1. Functionally, prokaryotic-type aspartate aminotransferase. Also has a prenate transaminase activity. Involved in the aromatic amino acids biosynthesis pathway via the arogenate route. Required for the transamination of prephenate into arogenate. Can use 2-oxoglutarate, oxaloacetate and prephenate as substrates, but not phenylpyruvate or 4-hydroxyphenylpyruvate. In Petunia hybrida (Petunia), this protein is Bifunctional aspartate aminotransferase and glutamate/aspartate-prephenate aminotransferase.